The following is a 437-amino-acid chain: Mannan endo-1,4-beta-mannosidase A (437 aa).

The N-terminal stretch at 1–19 (MMMLSKSLLSAATAASALA) is a signal peptide. A propeptide spanning residues 20–27 (AVLQPVPR) is cleaved from the precursor. A catalytic region spans residues 28 to 376 (ASSFVTISGT…VDAINGGTTT (349 aa)). A disulfide bridge links Cys53 with Cys56. Residues Asn157 and Asn184 are each glycosylated (N-linked (GlcNAc...) asparagine). The active-site Proton donor/acceptor is the Glu196. 196 to 198 (EPR) is a substrate binding site. Residues Cys199 and Cys202 are joined by a disulfide bond. Substrate-binding residues include Glu232 and Trp274. The N-linked (GlcNAc...) asparagine glycan is linked to Asn277. An intrachain disulfide couples Cys292 to Cys299. The Nucleophile role is filled by Glu303. Cys311 and Cys361 are joined by a disulfide. Asn355 carries an N-linked (GlcNAc...) asparagine glycan. Positions 372–399 (GGTTTPPPVSSTTTTSSRTSSTPPPPGG) are disordered. The linker stretch occupies residues 377 to 399 (PPPVSSTTTTSSRTSSTPPPPGG). The span at 381–392 (SSTTTTSSRTSS) shows a compositional bias: low complexity. The CBM1 domain maps to 400 to 435 (SCSPLYGQCGGSGYTGPTCCAQGTCIYSNYWYSQCL).

It belongs to the glycosyl hydrolase 5 (cellulase A) family. In terms of assembly, monomer.

The protein resides in the secreted. It catalyses the reaction Random hydrolysis of (1-&gt;4)-beta-D-mannosidic linkages in mannans, galactomannans and glucomannans.. Functionally, endo-1,4-mannanase that catalyzes the random hydrolysis of (1-&gt;4)-beta-D-mannosidic linkages in mannans and heteromannans. It is a crucial enzyme for depolymerization of seed galactomannans and wood galactoglucomannans. Active against locust bean gum and ivory nut mannan, releasing mainly tri- and disaccharides. Also has transglycosylation activity. Transglycosylation of two mannotrioses into a mannohexaose is the major transglycosylation route. The sequence is that of Mannan endo-1,4-beta-mannosidase A from Hypocrea jecorina (strain ATCC 56765 / BCRC 32924 / NRRL 11460 / Rut C-30) (Trichoderma reesei).